A 151-amino-acid chain; its full sequence is Aspartate carbamoyltransferase regulatory chain (151 aa).

Residues C107, C112, C135, and C138 each contribute to the Zn(2+) site.

It belongs to the PyrI family. In terms of assembly, contains catalytic and regulatory chains. Zn(2+) serves as cofactor.

Functionally, involved in allosteric regulation of aspartate carbamoyltransferase. This is Aspartate carbamoyltransferase regulatory chain from Thermococcus gammatolerans (strain DSM 15229 / JCM 11827 / EJ3).